The sequence spans 652 residues: Acetyl-coenzyme A synthetase (652 aa).

CoA-binding positions include 191 to 194, threonine 311, and asparagine 335; that span reads RAGR. ATP contacts are provided by residues 387–389, 411–416, aspartate 500, and arginine 515; these read GEP and DTWWQT. Serine 523 contributes to the CoA binding site. Arginine 526 contacts ATP. Mg(2+) contacts are provided by valine 537, histidine 539, and isoleucine 542. CoA is bound at residue arginine 584. Lysine 609 bears the N6-acetyllysine mark.

This sequence belongs to the ATP-dependent AMP-binding enzyme family. Mg(2+) is required as a cofactor. In terms of processing, acetylated. Deacetylation by the SIR2-homolog deacetylase activates the enzyme.

It carries out the reaction acetate + ATP + CoA = acetyl-CoA + AMP + diphosphate. Catalyzes the conversion of acetate into acetyl-CoA (AcCoA), an essential intermediate at the junction of anabolic and catabolic pathways. Acs undergoes a two-step reaction. In the first half reaction, Acs combines acetate with ATP to form acetyl-adenylate (AcAMP) intermediate. In the second half reaction, it can then transfer the acetyl group from AcAMP to the sulfhydryl group of CoA, forming the product AcCoA. Functionally, enables the cell to use acetate during aerobic growth to generate energy via the TCA cycle, and biosynthetic compounds via the glyoxylate shunt. Acetylates CheY, the response regulator involved in flagellar movement and chemotaxis. This Cronobacter sakazakii (strain ATCC BAA-894) (Enterobacter sakazakii) protein is Acetyl-coenzyme A synthetase.